A 339-amino-acid chain; its full sequence is MLDKIKALLQEVENMKAANAEELEALRIKYLSKKGEISALMNDFRNVAADQKREVGKYLNELKETTQSKINELKESFENVQTANDDIDLTRTAYPIELGTRHPLSLVKKEICDIFGRLGFSIAEGPEIEDDWHVFSSLNFAEDHPARDMQDTFFIQHNPDVLLRTHTSSVQTRVMEKQEPPIRIICPGRVYRNEAISYRAHCFFHQVEALYVDKNVSFADLKQALLFFAKEMFSPDTKIRLRPSYFPFTEPSAEMDISCNICGGKGCPFCKGTGWVEILGCGMVDPNVLENCGIDSKVYSGYALGMGIERITNLKYQVKDLRMFSENDVRFLRQFESAN.

A Mg(2+)-binding site is contributed by glutamate 250.

Belongs to the class-II aminoacyl-tRNA synthetase family. Phe-tRNA synthetase alpha subunit type 1 subfamily. Tetramer of two alpha and two beta subunits. Requires Mg(2+) as cofactor.

The protein localises to the cytoplasm. It carries out the reaction tRNA(Phe) + L-phenylalanine + ATP = L-phenylalanyl-tRNA(Phe) + AMP + diphosphate + H(+). The chain is Phenylalanine--tRNA ligase alpha subunit from Parabacteroides distasonis (strain ATCC 8503 / DSM 20701 / CIP 104284 / JCM 5825 / NCTC 11152).